A 610-amino-acid chain; its full sequence is E-selectin (610 aa).

An N-terminal signal peptide occupies residues 1–21 (MIASQFLSALTLVLLIKESGA). Residues 22–138 (WSYSASTTNM…CNKKKLALCY (117 aa)) enclose the C-type lectin domain. At 22–555 (WSYSASTTNM…CEATAKSNIP (534 aa)) the chain is on the extracellular side. N-linked (GlcNAc...) asparagine glycosylation occurs at Asn-30. Intrachain disulfides connect Cys-40–Cys-137, Cys-110–Cys-129, Cys-142–Cys-153, Cys-147–Cys-162, Cys-164–Cys-173, Cys-179–Cys-223, Cys-192–Cys-205, Cys-209–Cys-236, Cys-241–Cys-285, Cys-254–Cys-267, Cys-271–Cys-298, Cys-303–Cys-348, Cys-334–Cys-361, Cys-366–Cys-411, Cys-397–Cys-424, Cys-429–Cys-474, Cys-460–Cys-487, Cys-492–Cys-533, and Cys-519–Cys-546. Positions 101, 103, and 108 each coordinate Ca(2+). Residues 101 to 108 (EPNNKQNE), 112 to 117 (EIYIKR), and 125 to 127 (NDE) contribute to the a carbohydrate site. Asn-125 and Asp-126 together coordinate Ca(2+). Residues 139–174 (TAACTHTSCSGHGECVETINNYTCQCHPGFTGLRCE) enclose the EGF-like domain. N-linked (GlcNAc...) asparagine glycosylation is present at Asn-159. Sushi domains follow at residues 177 to 238 (VTCQ…ACHV), 239 to 300 (VECD…TCKA), 314 to 363 (VNCS…VCKA), 365 to 426 (QCKA…TCEA), 428 to 489 (RCDA…SCQV), and 490 to 548 (VQCA…TCEA). 2 N-linked (GlcNAc...) asparagine glycosylation sites follow: Asn-198 and Asn-202. A glycan (N-linked (GlcNAc...) asparagine) is linked at Asn-264. Asn-315, Asn-327, and Asn-331 each carry an N-linked (GlcNAc...) asparagine glycan. An N-linked (GlcNAc...) asparagine glycan is attached at Asn-526. A helical membrane pass occupies residues 556–577 (LTVGLSAAGTSLLTLASFLFWL). Topologically, residues 578–610 (LKRLRRKAKKFVPASSYQSLQSDGSYQMPSESA) are cytoplasmic.

The protein belongs to the selectin/LECAM family. As to quaternary structure, interacts with SELPLG/PSGL1 and PODXL2 through the sialyl Lewis X epitope. SELPLG sulfation appears not to be required for this interaction.

The protein localises to the cell membrane. Functionally, cell-surface glycoprotein having a role in immunoadhesion. Mediates in the adhesion of blood neutrophils in cytokine-activated endothelium through interaction with SELPLG/PSGL1. May have a role in capillary morphogenesis. The polypeptide is E-selectin (SELE) (Equus caballus (Horse)).